The primary structure comprises 174 residues: Photosystem I assembly protein Ycf4 (174 aa).

2 consecutive transmembrane segments (helical) span residues 11-31 (LSNI…FLNG) and 56-76 (IILM…CLTI).

The protein belongs to the Ycf4 family.

It is found in the plastid. It localises to the chloroplast thylakoid membrane. In terms of biological role, seems to be required for the assembly of the photosystem I complex. The chain is Photosystem I assembly protein Ycf4 from Emiliania huxleyi (Coccolithophore).